A 204-amino-acid polypeptide reads, in one-letter code: MKLLHLDSSILGDYSASRQLTASIVAKLQAADPALQYTYRDLAANPIGHLSGAHLAAAQNPPATRTPELANDLALGVQVLQEFLDADTVVIGVALYNFTISTQLKAWIDRVLVAGKTFRYTAEGALEGLAGNKRVILAVARGGRYGEGSPTAALEHAETYMRAALGFVGLHQPEVVVAEGLALGPEARAAGMAAAQAQIDALPV.

FMN contacts are provided by residues Ser9 and 15–17 (SAS).

It belongs to the azoreductase type 1 family. In terms of assembly, homodimer. FMN is required as a cofactor.

The enzyme catalyses 2 a quinone + NADH + H(+) = 2 a 1,4-benzosemiquinone + NAD(+). It catalyses the reaction N,N-dimethyl-1,4-phenylenediamine + anthranilate + 2 NAD(+) = 2-(4-dimethylaminophenyl)diazenylbenzoate + 2 NADH + 2 H(+). Its function is as follows. Quinone reductase that provides resistance to thiol-specific stress caused by electrophilic quinones. Functionally, also exhibits azoreductase activity. Catalyzes the reductive cleavage of the azo bond in aromatic azo compounds to the corresponding amines. The sequence is that of FMN-dependent NADH:quinone oxidoreductase from Xanthomonas campestris pv. campestris (strain ATCC 33913 / DSM 3586 / NCPPB 528 / LMG 568 / P 25).